The following is a 1165-amino-acid chain: Disease resistance protein RPS4B (1165 aa).

The region spanning 12 to 174 (PQHQVFINFR…EIVKEVKKVL (163 aa)) is the TIR domain. The active site involves E86. The NB-ARC domain occupies 211–474 (KQRLKELEEK…FLDIACFRSQ (264 aa)). One copy of the LRR 1 repeat lies at 592-613 (SHCPHECLTNNKINMPDGLELP). Residues 614–635 (LKEVRCLHWLKFPLEELPNDFD) form an LRR 2; degenerate repeat. LRR repeat units lie at residues 636–659 (PINLVDLKLPYSEIERLWDGVKDT), 684–703 (NLQRLNLEGCTSLESLRDVN), 704–725 (LTSLKTLTLSNCSNFKEFPLIP), 726–748 (ENLKALYLDGTSISQLPDNVGNL), 772–794 (LKTLQKLVLSGCSKLKEFPEINK), and 795–818 (SSLKILLLDGTSIKTMPQLPSVQY). Residues 819 to 836 (LCLSRNDHLIYLPAGINQ) form an LRR 9; degenerate repeat. The stretch at 837–863 (VSQLTRLDLKYCTKLTYVPELPPTLQY) is one LRR 10 repeat.

This sequence belongs to the disease resistance TIR-NB-LRR family. Interacts with RRS1B. RPS4B-RRS1B heterodimer interacts with the bacterial effectors AvrRps4 and PopP2.

It is found in the nucleus. The catalysed reaction is NAD(+) + H2O = ADP-D-ribose + nicotinamide + H(+). Its function is as follows. Disease resistance (R) protein that specifically recognizes the AvrRps4 type III effector avirulence protein from P.syringae. Heterodimerization with RRS1B is required to form a functional complex to recognize AvrRps4 and to mediate the hypersensitive response. This is Disease resistance protein RPS4B from Arabidopsis thaliana (Mouse-ear cress).